We begin with the raw amino-acid sequence, 279 residues long: Indole-3-glycerol phosphate synthase (279 aa).

The protein belongs to the TrpC family.

It catalyses the reaction 1-(2-carboxyphenylamino)-1-deoxy-D-ribulose 5-phosphate + H(+) = (1S,2R)-1-C-(indol-3-yl)glycerol 3-phosphate + CO2 + H2O. The protein operates within amino-acid biosynthesis; L-tryptophan biosynthesis; L-tryptophan from chorismate: step 4/5. This is Indole-3-glycerol phosphate synthase from Ectopseudomonas mendocina (strain ymp) (Pseudomonas mendocina).